Here is a 57-residue protein sequence, read N- to C-terminus: uncharacterized protein (57 aa).

The helical transmembrane segment at 21–37 (GTYTLVVAFVLAFLVYS) threads the bilayer.

It localises to the host membrane. This is an uncharacterized protein from Human herpesvirus 6B (strain Z29) (HHV-6 variant B).